Reading from the N-terminus, the 172-residue chain is Shikimate kinase (172 aa).

14–19 contacts ATP; the sequence is GAGKST. Residue serine 18 participates in Mg(2+) binding. Substrate-binding residues include aspartate 36, arginine 60, and glycine 82. Arginine 120 is an ATP binding site. Arginine 139 provides a ligand contact to substrate. ATP is bound at residue glutamine 156.

Belongs to the shikimate kinase family. Monomer. Requires Mg(2+) as cofactor.

The protein localises to the cytoplasm. It catalyses the reaction shikimate + ATP = 3-phosphoshikimate + ADP + H(+). Its pathway is metabolic intermediate biosynthesis; chorismate biosynthesis; chorismate from D-erythrose 4-phosphate and phosphoenolpyruvate: step 5/7. Functionally, catalyzes the specific phosphorylation of the 3-hydroxyl group of shikimic acid using ATP as a cosubstrate. In Aliivibrio salmonicida (strain LFI1238) (Vibrio salmonicida (strain LFI1238)), this protein is Shikimate kinase.